Here is a 37-residue protein sequence, read N- to C-terminus: Large ribosomal subunit protein bL36 (37 aa).

The protein belongs to the bacterial ribosomal protein bL36 family.

In Cyanothece sp. (strain PCC 7425 / ATCC 29141), this protein is Large ribosomal subunit protein bL36.